The following is a 229-amino-acid chain: MSSLREIILDTETTGLDPQQGHRIVEIGAIEMVNKVLTGKHFHFYINPERDMPFEAYKIHGISGEFLKDKPLFKTIANDFLKFIADSTLIIHNAPFDIKFLNHELSLLKRTEIKFLELTNTIDTLVMARNMFPGARYSLDALCKRFKVDNSGRQLHGALKDAALLAEVYVALTGGRQSTFKMINKPDEINNLAVKCVDVQQIKRGIVVKPTKEELQKHKEFIDKILIQA.

Residues Asp10 and Glu12 each coordinate a divalent metal cation. 4 residues coordinate substrate: Asp10, Glu12, Glu55, and His60. The active-site Proton acceptor is the His156. Residue Asp161 coordinates a divalent metal cation. Asp161 is a substrate binding site.

As to quaternary structure, DNA polymerase III contains a core (composed of alpha, epsilon and theta chains) that associates with a tau subunit. This core dimerizes to form the POLIII' complex. PolIII' associates with the gamma complex (composed of gamma, delta, delta', psi and chi chains) and with the beta chain to form the complete DNA polymerase III complex. It depends on Mg(2+) as a cofactor. Requires Mn(2+) as cofactor.

The enzyme catalyses DNA(n) + a 2'-deoxyribonucleoside 5'-triphosphate = DNA(n+1) + diphosphate. Its function is as follows. DNA polymerase III is a complex, multichain enzyme responsible for most of the replicative synthesis in bacteria. The epsilon subunit contain the editing function and is a proofreading 3'-5' exonuclease. The protein is DNA polymerase III subunit epsilon (dnaQ) of Rickettsia prowazekii (strain Madrid E).